Consider the following 67-residue polypeptide: Large ribosomal subunit protein bL35 (67 aa).

It belongs to the bacterial ribosomal protein bL35 family.

The polypeptide is Large ribosomal subunit protein bL35 (Leptospira interrogans serogroup Icterohaemorrhagiae serovar Lai (strain 56601)).